The sequence spans 417 residues: MLKREMNIADYDAELWQAMEQEKVRQEEHIELIASENYTSPRVMQAQGSQLTNKYAEGYPGKRYYGGCEYVDIVEQLAIDRAKELFGADYANVQPHSGSQANFAVYTALLQPGDTVLGMNLAQGGHLTHGSPVNFSGKLYNIIPYGIDESGKIDYEDMAKQAETHKPKMIIGGFSAYSGVVDWAKMREIADSIGAYLFVDMAHVAGLIAAGVYPNPVPHAHVVTTTTHKTLAGPRGGLILAHGGNEELYKKLNSAVFPSAQGGPLMHVIAAKAVALKEAMEPEFKVYQQQVAKNAKAMVEVFLNRGYKVVSGGTENHLFLLDLVDKNLTGKEADAALGRANITVNKNSVPNDPKSPFVTSGIRIGSPAVTRRGFKEAEVKELAGWMCDVLDNINDEAVIERIKGKVLDICARFPVYA.

(6S)-5,6,7,8-tetrahydrofolate-binding positions include Leu-121 and 125 to 127; that span reads GHL. Lys-229 is modified (N6-(pyridoxal phosphate)lysine). 355-357 contacts (6S)-5,6,7,8-tetrahydrofolate; it reads SPF.

This sequence belongs to the SHMT family. In terms of assembly, homodimer. It depends on pyridoxal 5'-phosphate as a cofactor.

The protein localises to the cytoplasm. The catalysed reaction is (6R)-5,10-methylene-5,6,7,8-tetrahydrofolate + glycine + H2O = (6S)-5,6,7,8-tetrahydrofolate + L-serine. It functions in the pathway one-carbon metabolism; tetrahydrofolate interconversion. The protein operates within amino-acid biosynthesis; glycine biosynthesis; glycine from L-serine: step 1/1. Its function is as follows. Catalyzes the reversible interconversion of serine and glycine with tetrahydrofolate (THF) serving as the one-carbon carrier. This reaction serves as the major source of one-carbon groups required for the biosynthesis of purines, thymidylate, methionine, and other important biomolecules. Also exhibits THF-independent aldolase activity toward beta-hydroxyamino acids, producing glycine and aldehydes, via a retro-aldol mechanism. This Enterobacter sp. (strain 638) protein is Serine hydroxymethyltransferase.